Here is a 249-residue protein sequence, read N- to C-terminus: Carbohydrate deacetylase (249 aa).

The Mg(2+) site is built by His60 and His125.

This sequence belongs to the YdjC deacetylase family. As to quaternary structure, homodimer. The cofactor is Mg(2+).

Probably catalyzes the deacetylation of acetylated carbohydrates an important step in the degradation of oligosaccharides. This Thermoanaerobacter pseudethanolicus (strain ATCC 33223 / 39E) (Clostridium thermohydrosulfuricum) protein is Carbohydrate deacetylase.